The following is a 190-amino-acid chain: UPF0340 protein BT9727_4999 (190 aa).

It belongs to the UPF0340 family.

The sequence is that of UPF0340 protein BT9727_4999 from Bacillus thuringiensis subsp. konkukian (strain 97-27).